The chain runs to 431 residues: UDP-N-acetylmuramoylalanine--D-glutamate ligase (431 aa).

111-117 is an ATP binding site; the sequence is GTDGKST.

Belongs to the MurCDEF family.

It localises to the cytoplasm. It catalyses the reaction UDP-N-acetyl-alpha-D-muramoyl-L-alanine + D-glutamate + ATP = UDP-N-acetyl-alpha-D-muramoyl-L-alanyl-D-glutamate + ADP + phosphate + H(+). It participates in cell wall biogenesis; peptidoglycan biosynthesis. Cell wall formation. Catalyzes the addition of glutamate to the nucleotide precursor UDP-N-acetylmuramoyl-L-alanine (UMA). The sequence is that of UDP-N-acetylmuramoylalanine--D-glutamate ligase from Petrotoga mobilis (strain DSM 10674 / SJ95).